The primary structure comprises 369 residues: UDP-3-O-(3-hydroxymyristoyl)glucosamine N-acyltransferase (369 aa).

H240 (proton acceptor) is an active-site residue.

Belongs to the transferase hexapeptide repeat family. LpxD subfamily. As to quaternary structure, homotrimer.

The enzyme catalyses a UDP-3-O-[(3R)-3-hydroxyacyl]-alpha-D-glucosamine + a (3R)-hydroxyacyl-[ACP] = a UDP-2-N,3-O-bis[(3R)-3-hydroxyacyl]-alpha-D-glucosamine + holo-[ACP] + H(+). The catalysed reaction is UDP-3-O-[(3R)-3-hydroxytetradecanoyl]-alpha-D-glucosamine + (3R)-hydroxytetradecanoyl-[ACP] = UDP-2-N,3-O-bis[(3R)-3-hydroxytetradecanoyl]-alpha-D-glucosamine + holo-[ACP] + H(+). It participates in glycolipid biosynthesis; lipid IV(A) biosynthesis; lipid IV(A) from (3R)-3-hydroxytetradecanoyl-[acyl-carrier-protein] and UDP-N-acetyl-alpha-D-glucosamine: step 3/6. In terms of biological role, catalyzes the N-acylation of UDP-3-O-(hydroxytetradecanoyl)glucosamine using 3-hydroxytetradecanoyl-ACP as the acyl donor. Is involved in the biosynthesis of lipid A, a phosphorylated glycolipid that anchors the lipopolysaccharide to the outer membrane of the cell. This Blochmanniella floridana protein is UDP-3-O-(3-hydroxymyristoyl)glucosamine N-acyltransferase.